Consider the following 221-residue polypeptide: Woronin body major protein (221 aa).

The Microbody targeting signal signature appears at 219 to 221 (SRL).

The protein belongs to the eIF-5A family. Hex1 subfamily. In terms of assembly, forms oligomers. Self-assembles into hexagonal rods.

It localises to the cell septum. Functionally, major component of Woronin bodies, fungal-specific organelles that occlude septal pores in order to separate intact from damaged compartments. Hex1 binds directly or indirectly to the Woronin body tether that in turn is anchored at the rim of the septal pore. The polypeptide is Woronin body major protein (Emericella nidulans (strain FGSC A4 / ATCC 38163 / CBS 112.46 / NRRL 194 / M139) (Aspergillus nidulans)).